The primary structure comprises 372 residues: Chaperone protein DnaJ (372 aa).

The region spanning 5 to 69 (EFYDRLGVSK…QKRAAYDQYG (65 aa)) is the J domain. A CR-type zinc finger spans residues 129–211 (GTEKEVKYHR…CHGTGHEKQA (83 aa)). Cysteine 142, cysteine 145, cysteine 159, cysteine 162, cysteine 185, cysteine 188, cysteine 199, and cysteine 202 together coordinate Zn(2+). CXXCXGXG motif repeat units lie at residues 142–149 (CRTCNGSG), 159–166 (CGRCHGAG), 185–192 (CDVCHGRG), and 199–206 (CTTCHGTG).

Belongs to the DnaJ family. In terms of assembly, homodimer. Zn(2+) is required as a cofactor.

It localises to the cytoplasm. In terms of biological role, participates actively in the response to hyperosmotic and heat shock by preventing the aggregation of stress-denatured proteins and by disaggregating proteins, also in an autonomous, DnaK-independent fashion. Unfolded proteins bind initially to DnaJ; upon interaction with the DnaJ-bound protein, DnaK hydrolyzes its bound ATP, resulting in the formation of a stable complex. GrpE releases ADP from DnaK; ATP binding to DnaK triggers the release of the substrate protein, thus completing the reaction cycle. Several rounds of ATP-dependent interactions between DnaJ, DnaK and GrpE are required for fully efficient folding. Also involved, together with DnaK and GrpE, in the DNA replication of plasmids through activation of initiation proteins. The protein is Chaperone protein DnaJ of Streptococcus pneumoniae (strain ATCC BAA-255 / R6).